The chain runs to 201 residues: dTTP/UTP pyrophosphatase (201 aa).

Asp-76 serves as the catalytic Proton acceptor.

This sequence belongs to the Maf family. YhdE subfamily. A divalent metal cation is required as a cofactor.

Its subcellular location is the cytoplasm. The enzyme catalyses dTTP + H2O = dTMP + diphosphate + H(+). The catalysed reaction is UTP + H2O = UMP + diphosphate + H(+). In terms of biological role, nucleoside triphosphate pyrophosphatase that hydrolyzes dTTP and UTP. May have a dual role in cell division arrest and in preventing the incorporation of modified nucleotides into cellular nucleic acids. The chain is dTTP/UTP pyrophosphatase from Neisseria meningitidis serogroup A / serotype 4A (strain DSM 15465 / Z2491).